Here is an 83-residue protein sequence, read N- to C-terminus: MQNDAGEFVDLYVPRKCSASNRIIGAKDHASIQINIAEVDKVTGRFNSQYKTYAICGAIRRMGESDDSIMRLAKNDGIVSKNF.

It belongs to the eukaryotic ribosomal protein eS21 family. Component of the 40S small ribosomal subunit.

It localises to the cytoplasm. Its subcellular location is the cytosol. It is found in the rough endoplasmic reticulum. Functionally, component of the small ribosomal subunit. The ribosome is a large ribonucleoprotein complex responsible for the synthesis of proteins in the cell. This chain is Small ribosomal subunit protein eS21 (rps21), found in Xenopus laevis (African clawed frog).